Reading from the N-terminus, the 152-residue chain is Protein ripply3 (152 aa).

Basic and acidic residues predominate over residues 1-24 (MRPEAAGVREARGRLCHCPGDDPG). 2 disordered regions span residues 1–76 (MRPE…GAFG) and 113–152 (FYND…ERAE). The WRPW motif signature appears at 40 to 43 (WRPW). The segment at 79 to 114 (HPVRLYLPVSKRQEYLQSSGEKVLASFPVQATIHFY) is ripply homology domain. Acidic residues predominate over residues 116–130 (DDSESGSEEEQEEEA). Over residues 140-152 (AEVRDSAQEERAE) the composition is skewed to basic and acidic residues.

The protein belongs to the ripply family. In terms of assembly, interacts with TBX1.

Its subcellular location is the nucleus. Acts as a transcriptional corepressor. Negative regulator of the transcriptional activity of TBX1. Plays a role in the development of the pharyngeal apparatus and derivatives. The protein is Protein ripply3 (Ripply3) of Mus musculus (Mouse).